A 739-amino-acid polypeptide reads, in one-letter code: Phosphoribosylformylglycinamidine synthase subunit PurL (739 aa).

Residue His-54 is part of the active site. Positions 57 and 96 each coordinate ATP. A Mg(2+)-binding site is contributed by Glu-98. Residues 99 to 102 and Arg-121 contribute to the substrate site; that span reads SHNH. The active-site Proton acceptor is His-100. Asp-122 provides a ligand contact to Mg(2+). A substrate-binding site is contributed by Gln-245. Mg(2+) is bound at residue Asp-275. 319 to 321 is a binding site for substrate; the sequence is ESQ. ATP contacts are provided by Asp-504 and Gly-541. Asn-542 lines the Mg(2+) pocket. Residue Ser-544 participates in substrate binding.

Belongs to the FGAMS family. In terms of assembly, monomer. Part of the FGAM synthase complex composed of 1 PurL, 1 PurQ and 2 PurS subunits.

Its subcellular location is the cytoplasm. It carries out the reaction N(2)-formyl-N(1)-(5-phospho-beta-D-ribosyl)glycinamide + L-glutamine + ATP + H2O = 2-formamido-N(1)-(5-O-phospho-beta-D-ribosyl)acetamidine + L-glutamate + ADP + phosphate + H(+). Its pathway is purine metabolism; IMP biosynthesis via de novo pathway; 5-amino-1-(5-phospho-D-ribosyl)imidazole from N(2)-formyl-N(1)-(5-phospho-D-ribosyl)glycinamide: step 1/2. Functionally, part of the phosphoribosylformylglycinamidine synthase complex involved in the purines biosynthetic pathway. Catalyzes the ATP-dependent conversion of formylglycinamide ribonucleotide (FGAR) and glutamine to yield formylglycinamidine ribonucleotide (FGAM) and glutamate. The FGAM synthase complex is composed of three subunits. PurQ produces an ammonia molecule by converting glutamine to glutamate. PurL transfers the ammonia molecule to FGAR to form FGAM in an ATP-dependent manner. PurS interacts with PurQ and PurL and is thought to assist in the transfer of the ammonia molecule from PurQ to PurL. The polypeptide is Phosphoribosylformylglycinamidine synthase subunit PurL (Lactococcus lactis subsp. cremoris (Streptococcus cremoris)).